Here is an 85-residue protein sequence, read N- to C-terminus: Large ribosomal subunit protein bL27 (85 aa).

Positions 1-20 (MAHKKGGGTTRNGRDSESKR) are disordered.

It belongs to the bacterial ribosomal protein bL27 family.

The sequence is that of Large ribosomal subunit protein bL27 from Herminiimonas arsenicoxydans.